Reading from the N-terminus, the 168-residue chain is Mediator of RNA polymerase II transcription subunit 7a (168 aa).

Coiled coils occupy residues 64-92 (KDSN…ADVL) and 132-166 (IMEL…LTLD).

The protein belongs to the Mediator complex subunit 7 family. Component of the Mediator complex. Interacts with MEE14/CBP1.

Its subcellular location is the nucleus. Functionally, component of the Mediator complex, a coactivator involved in the regulated transcription of nearly all RNA polymerase II-dependent genes. Mediator functions as a bridge to convey information from gene-specific regulatory proteins to the basal RNA polymerase II transcription machinery. The Mediator complex, having a compact conformation in its free form, is recruited to promoters by direct interactions with regulatory proteins and serves for the assembly of a functional pre-initiation complex with RNA polymerase II and the general transcription factors. The chain is Mediator of RNA polymerase II transcription subunit 7a (MED7A) from Arabidopsis thaliana (Mouse-ear cress).